Consider the following 271-residue polypeptide: 3-methyl-2-oxobutanoate hydroxymethyltransferase (271 aa).

2 residues coordinate Mg(2+): aspartate 53 and aspartate 92. 3-methyl-2-oxobutanoate is bound by residues 53-54 (DS), aspartate 92, and lysine 120. Glutamate 122 is a binding site for Mg(2+). The Proton acceptor role is filled by glutamate 189.

It belongs to the PanB family. As to quaternary structure, homodecamer; pentamer of dimers. Requires Mg(2+) as cofactor.

Its subcellular location is the cytoplasm. It carries out the reaction 3-methyl-2-oxobutanoate + (6R)-5,10-methylene-5,6,7,8-tetrahydrofolate + H2O = 2-dehydropantoate + (6S)-5,6,7,8-tetrahydrofolate. It participates in cofactor biosynthesis; (R)-pantothenate biosynthesis; (R)-pantoate from 3-methyl-2-oxobutanoate: step 1/2. Functionally, catalyzes the reversible reaction in which hydroxymethyl group from 5,10-methylenetetrahydrofolate is transferred onto alpha-ketoisovalerate to form ketopantoate. In Paraburkholderia xenovorans (strain LB400), this protein is 3-methyl-2-oxobutanoate hydroxymethyltransferase.